The chain runs to 104 residues: MTTYAIIDIAGKQLWVEPKRYYSVNKINVEIGKKIALQRILLLSKIGEKIKIGQPFLNGISINAIILRHFLAPKVIVYKMQPKKKTRRKRGHRQHLTSFLINDF.

It belongs to the bacterial ribosomal protein bL21 family. Part of the 50S ribosomal subunit.

The protein localises to the plastid. The protein resides in the cyanelle. Functionally, this protein binds to 23S rRNA. The protein is Large ribosomal subunit protein bL21c of Cyanophora paradoxa.